Consider the following 520-residue polypeptide: Cytochrome P450 monooxygenase btcC (520 aa).

Residues 2 to 22 (IFLLTLAGLKVLSIVILFGII) traverse the membrane as a helical segment. The N-linked (GlcNAc...) asparagine glycan is linked to Asn177. Residue Cys448 participates in heme binding. Asn511 carries an N-linked (GlcNAc...) asparagine glycan.

This sequence belongs to the cytochrome P450 family. Heme serves as cofactor.

It is found in the membrane. It functions in the pathway secondary metabolite biosynthesis; terpenoid biosynthesis. Its function is as follows. Cytochrome P4590 monooxygenase part of the gene cluster that mediates the biosynthesis of betaestacins. The bifunctional terpene synthase btcA converts isopentenyl diphosphate (IPP) and dimethylallyl diphosphate (DMAPP) into the sesterterpene betaestacin I. The C-terminal prenyltransferase (PT) domain of btcA catalyzes formation of GFPP, whereas the N-terminal terpene cyclase (TC) domain catalyzes the cyclization of GFPP into betaestacin I. The cytochrome P450 monooxygenase btcB oxidizes the C25 methyl group of betaestacin I to yield the carboxylic acid betaestacin IV via the alcohol betaestacin III. The cytochrome P450 monooxygenase btcC further catalyzes the multistep oxidation of betaestacin IV to produce several compounds, including betaestacins Va, Vb, Vc and VI. The sequence is that of Cytochrome P450 monooxygenase btcC from Colletotrichum orbiculare (strain 104-T / ATCC 96160 / CBS 514.97 / LARS 414 / MAFF 240422) (Cucumber anthracnose fungus).